A 456-amino-acid polypeptide reads, in one-letter code: Putative sodium-coupled neutral amino acid transporter 11 (456 aa).

The disordered stretch occupies residues 1-25 (MRAGPRRQHLLPPQDNRAAVGYQRQ). Residues 58–78 (FNVVNSIIGSGIIDFSLILLI) form a helical membrane-spanning segment. N-linked (GlcNAc...) asparagine glycosylation occurs at Asn-94. 6 consecutive transmembrane segments (helical) span residues 98–118 (GFPG…IAMI), 143–163 (VFIG…LPLS), 171–191 (LGKV…IVMA), 206–226 (AWVF…FAFI), 252–272 (MSIV…YLTF), and 291–313 (VTFG…CFVT). An N-linked (GlcNAc...) asparagine glycan is attached at Asn-325. The next 3 helical transmembrane spans lie at 329-349 (VFHI…SLLI), 351-371 (CLGI…IFII), and 390-410 (IMSY…FVMA).

The protein belongs to the amino acid/polyamine transporter 2 family.

It is found in the membrane. Functionally, putative sodium-dependent amino acid/proton antiporter. This Macaca fascicularis (Crab-eating macaque) protein is Putative sodium-coupled neutral amino acid transporter 11 (SLC38A11).